A 562-amino-acid chain; its full sequence is Formate--tetrahydrofolate ligase (562 aa).

Residue 71–78 (TPAGEGKS) coordinates ATP.

This sequence belongs to the formate--tetrahydrofolate ligase family.

The enzyme catalyses (6S)-5,6,7,8-tetrahydrofolate + formate + ATP = (6R)-10-formyltetrahydrofolate + ADP + phosphate. Its pathway is one-carbon metabolism; tetrahydrofolate interconversion. The chain is Formate--tetrahydrofolate ligase from Bacillus cereus (strain ATCC 14579 / DSM 31 / CCUG 7414 / JCM 2152 / NBRC 15305 / NCIMB 9373 / NCTC 2599 / NRRL B-3711).